The sequence spans 326 residues: dTDP-4-dehydro-6-deoxy-D-allose reductase (326 aa).

Residues 15 to 21 (GALGFIG) and 129 to 132 (MSSS) each bind NADP(+). The Proton donor/acceptor role is filled by Y160. Residues K164 and 187–190 (PGNV) each bind NADP(+).

The protein belongs to the NAD(P)-dependent epimerase/dehydratase family.

The catalysed reaction is dTDP-6-deoxy-alpha-D-allose + NAD(+) = dTDP-4-dehydro-6-deoxy-alpha-D-allose + NADH + H(+). The enzyme catalyses dTDP-6-deoxy-alpha-D-allose + NADP(+) = dTDP-4-dehydro-6-deoxy-alpha-D-allose + NADPH + H(+). Its function is as follows. Catalyzes the stereospecific reduction of the C-4 keto group of dTDP-4-dehydro-6-deoxy-D-allose, leading to dTDP-6-deoxy-D-allose, an intermediate in the biosynthesis of the mycinose moiety of the chalcomycin antibiotic. This is dTDP-4-dehydro-6-deoxy-D-allose reductase (chmD) from Streptomyces bikiniensis.